A 555-amino-acid polypeptide reads, in one-letter code: CTP synthase (555 aa).

Residues 1–277 (MPKEPETEYD…DQHVMERLNV (277 aa)) are amidoligase domain. CTP is bound at residue serine 26. Serine 26 is a UTP binding site. 27-32 (GLGKGI) serves as a coordination point for ATP. Residue tyrosine 67 coordinates L-glutamine. Aspartate 84 provides a ligand contact to ATP. Residues aspartate 84 and glutamate 152 each coordinate Mg(2+). CTP contacts are provided by residues 159 to 161 (DIE), 198 to 203 (KTKPTQ), and lysine 234. Residues 198–203 (KTKPTQ) and lysine 234 each bind UTP. The region spanning 307-542 (LVGKYDLEDA…LKSVDSTLDA (236 aa)) is the Glutamine amidotransferase type-1 domain. Glycine 364 is a binding site for L-glutamine. The Nucleophile; for glutamine hydrolysis role is filled by cysteine 391. Residues 392-395 (LGFQ), glutamate 415, and arginine 472 contribute to the L-glutamine site. Active-site residues include histidine 515 and glutamate 517.

Belongs to the CTP synthase family. As to quaternary structure, homotetramer.

It carries out the reaction UTP + L-glutamine + ATP + H2O = CTP + L-glutamate + ADP + phosphate + 2 H(+). The enzyme catalyses L-glutamine + H2O = L-glutamate + NH4(+). The catalysed reaction is UTP + NH4(+) + ATP = CTP + ADP + phosphate + 2 H(+). Its pathway is pyrimidine metabolism; CTP biosynthesis via de novo pathway; CTP from UDP: step 2/2. With respect to regulation, allosterically activated by GTP, when glutamine is the substrate; GTP has no effect on the reaction when ammonia is the substrate. The allosteric effector GTP functions by stabilizing the protein conformation that binds the tetrahedral intermediate(s) formed during glutamine hydrolysis. Inhibited by the product CTP, via allosteric rather than competitive inhibition. Functionally, catalyzes the ATP-dependent amination of UTP to CTP with either L-glutamine or ammonia as the source of nitrogen. Regulates intracellular CTP levels through interactions with the four ribonucleotide triphosphates. This is CTP synthase from Haloquadratum walsbyi (strain DSM 16790 / HBSQ001).